Reading from the N-terminus, the 360-residue chain is Glutamate 5-kinase (360 aa).

Lysine 7 lines the ATP pocket. Substrate-binding residues include serine 47, aspartate 134, and asparagine 146. ATP contacts are provided by residues 166 to 167 (TD) and 210 to 216 (TGGISTK). The region spanning 275–356 (VGKITLDDGA…SSIIVVHRDV (82 aa)) is the PUA domain.

It belongs to the glutamate 5-kinase family.

Its subcellular location is the cytoplasm. It catalyses the reaction L-glutamate + ATP = L-glutamyl 5-phosphate + ADP. Its pathway is amino-acid biosynthesis; L-proline biosynthesis; L-glutamate 5-semialdehyde from L-glutamate: step 1/2. In terms of biological role, catalyzes the transfer of a phosphate group to glutamate to form L-glutamate 5-phosphate. In Prochlorococcus marinus (strain MIT 9312), this protein is Glutamate 5-kinase.